The primary structure comprises 438 residues: MGRVEDGGTTEELEDWDPGTSALPAPGIKQGPREQTGTGPLSQKCWEPEPDAPSQPGPALWSRGRARTQALAGGSSLQQLDPENTGFIGADTFTGLVHSHELPLDPAKLDMLVALAQSNEQGQVCYQELVDLISSKRSSSFKRAIANGQRALPRDGPLDEPGLGVYKRFVRYVAYEILPCEVDRRWYFYRHRSCPPPVFMASVTLAQIIVFLCYGARLNKWVLQTYHPEYMKSPLVYHPGHRARAWRFLTYMFMHVGLEQLGFNALLQLMIGVPLEMVHGLLRISLLYLAGVLAGSLTVSITDMRAPVVGGSGGVYALCSAHLANVVMNWAGMRCPYKLLRMVLALVCMSSEVGRAVWLRFSPPLPASGPQPSFMAHLAGAVVGVSMGLTILRSYEERLRDQCGWWVVLLAYGTFLLFAVFWNVFAYDLLGAHIPPPP.

The tract at residues 1-62 (MGRVEDGGTT…PSQPGPALWS (62 aa)) is disordered. Residues 8–17 (GTTEELEDWD) show a composition bias toward acidic residues. The next 7 membrane-spanning stretches (helical) occupy residues 196–216 (PPVF…CYGA), 262–282 (GFNA…HGLL), 284–304 (ISLL…ITDM), 308–328 (VVGG…NVVM), 340–359 (LRMV…AVWL), 372–392 (PSFM…LTIL), and 405–425 (WWVV…WNVF). Serine 312 functions as the Nucleophile in the catalytic mechanism. The active site involves histidine 377.

This sequence belongs to the peptidase S54 family. As to expression, detected in heart, brain, skeletal muscle and kidney.

The protein resides in the membrane. It catalyses the reaction Cleaves type-1 transmembrane domains using a catalytic dyad composed of serine and histidine that are contributed by different transmembrane domains.. Functionally, may be involved in regulated intramembrane proteolysis and the subsequent release of functional polypeptides from their membrane anchors. This is Rhomboid-related protein 1 (RHBDL1) from Homo sapiens (Human).